Consider the following 189-residue polypeptide: Urease accessory protein UreF (189 aa).

The protein belongs to the UreF family. As to quaternary structure, ureD, UreF and UreG form a complex that acts as a GTP-hydrolysis-dependent molecular chaperone, activating the urease apoprotein by helping to assemble the nickel containing metallocenter of UreC. The UreE protein probably delivers the nickel.

Its subcellular location is the cytoplasm. Required for maturation of urease via the functional incorporation of the urease nickel metallocenter. The protein is Urease accessory protein UreF of Staphylococcus xylosus.